A 278-amino-acid chain; its full sequence is Secoisolariciresinol dehydrogenase (278 aa).

NAD(+)-binding positions include 23 to 28 (GGAGGI), D47, V73, and N99. S104 and S164 together coordinate substrate. The Proton donor/acceptor role is filled by Y167. K171 and V200 together coordinate NAD(+).

This sequence belongs to the short-chain dehydrogenases/reductases (SDR) family. As to quaternary structure, homotetramer. Mostly expressed in stems and rhizomes, and, to a lower extent, in leaves.

The enzyme catalyses (-)-secoisolariciresinol + 2 NAD(+) = (-)-matairesinol + 2 NADH + 2 H(+). The protein operates within aromatic compound metabolism; phenylpropanoid biosynthesis. Its function is as follows. Oxidoreductase involved in lignan biosynthesis. Also involved in the biosynthesis of etoposide, a chemotherapeutic compound of the topoisomerase inhibitor family. Catalyzes the stereospecific conversion of (-)-secoisolariciresinol to (-)-matairesinol via a lactol intermediate. The chain is Secoisolariciresinol dehydrogenase from Sinopodophyllum hexandrum (Himalayan may apple).